Here is a 641-residue protein sequence, read N- to C-terminus: RING finger containing E3 ubiquitin-protein ligase WSV403 (641 aa).

The RING-type; atypical zinc-finger motif lies at 329–371 (CVGCLYDIEDEKRCYKLPCGHFMHTFCLSNKCSKANFRCVKCF).

The catalysed reaction is S-ubiquitinyl-[E2 ubiquitin-conjugating enzyme]-L-cysteine + [acceptor protein]-L-lysine = [E2 ubiquitin-conjugating enzyme]-L-cysteine + N(6)-ubiquitinyl-[acceptor protein]-L-lysine.. The protein operates within protein modification; protein ubiquitination. Probable E3 ubiquitin-protein ligase which accepts ubiquitin from an E2 ubiquitin-conjugating enzyme in the form of a thioester and then directly transfers the ubiquitin to targeted substrates. This chain is RING finger containing E3 ubiquitin-protein ligase WSV403, found in White spot syndrome virus (isolate Shrimp/China/Tongan/1996) (WSSV).